The sequence spans 240 residues: Zinc finger CCCH domain-containing protein 52 (240 aa).

Disordered stretches follow at residues 1-37 (MDARKRGRPEAAASHNSNGGFKRSKQEMESISTGLGS) and 81-106 (SQVSRNMQGSGGPGGRFSGRGDPGSG). The C3H1-type 1 zinc-finger motif lies at 36–64 (GSKSKPCTKFFSTSGCPFGDNCHFLHYVP). The span at 89-104 (GSGGPGGRFSGRGDPG) shows a compositional bias: gly residues. A KH domain is found at 113–177 (ASTSKISVDA…EQINVASGMV (65 aa)). A C3H1-type 2 zinc finger spans residues 205-232 (NYKTKICDRYSKGNCTYGDRCHFAHGES).

This chain is Zinc finger CCCH domain-containing protein 52, found in Arabidopsis thaliana (Mouse-ear cress).